We begin with the raw amino-acid sequence, 247 residues long: Carboxy-S-adenosyl-L-methionine synthase (247 aa).

Residues tyrosine 39, 64-66, 89-90, 117-118, asparagine 132, and arginine 199 contribute to the S-adenosyl-L-methionine site; these read GCS, DN, and DI.

Belongs to the class I-like SAM-binding methyltransferase superfamily. Cx-SAM synthase family. As to quaternary structure, homodimer.

The enzyme catalyses prephenate + S-adenosyl-L-methionine = carboxy-S-adenosyl-L-methionine + 3-phenylpyruvate + H2O. Catalyzes the conversion of S-adenosyl-L-methionine (SAM) to carboxy-S-adenosyl-L-methionine (Cx-SAM). The sequence is that of Carboxy-S-adenosyl-L-methionine synthase from Salmonella agona (strain SL483).